The following is a 358-amino-acid chain: Arogenate dehydrogenase 2, chloroplastic (358 aa).

The transit peptide at 1–36 (MLLHFSPAKPLISPPNLRRNSPTFLISPPRSLRIRA) directs the protein to the chloroplast. In terms of domain architecture, Prephenate/arogenate dehydrogenase spans 59-338 (LKIAVLGFGN…KKTEQKLLND (280 aa)). Positions 336 to 358 (LNDGGVVPMNDISSSSSSSSSSS) are disordered. Positions 348–358 (SSSSSSSSSSS) are enriched in low complexity.

Belongs to the prephenate/arogenate dehydrogenase family. As to expression, expressed in roots, stems, leaves, flowers, siliques and seeds. More abundant in seeds.

It is found in the plastid. The protein resides in the chloroplast. The catalysed reaction is L-arogenate + NADP(+) = L-tyrosine + CO2 + NADPH. It functions in the pathway amino-acid biosynthesis; L-tyrosine biosynthesis; L-tyrosine from L-arogenate (NADP(+) route): step 1/1. In terms of biological role, involved in the biosynthesis of tyrosine. Has a weak prephenate dehydrogenase activity. The chain is Arogenate dehydrogenase 2, chloroplastic (TYRAAT2) from Arabidopsis thaliana (Mouse-ear cress).